The primary structure comprises 373 residues: MLKQESNDIGSGENNRARPCDTCRSNACTVYCHADSAYLCMSCDAQVHSANRVASRHKRVRVCESCERAPAAFLCEADDASLCTACDSEVHSANPLARRHQRVPILPISGNSFSSMTTTHHQSEKTMTDPEKRLVVDQEEGEEGDKDAKEVASWLFPNSDKNNNNQNNGLLFSDEYLNLVDYNSSMDYKFTGEYSQHQQNCSVPQTSYGGDRVVPLKLEESRGHQCHNQQNFQFNIKYGSSGTHYNDNGSINHNAYISSMETGVVPESTACVTTASHPRTPKGTVEQQPDPASQMITVTQLSPMDREARVLRYREKRKTRKFEKTIRYASRKAYAEIRPRVNGRFAKREIEAEEQGFNTMLMYNTGYGIVPSF.

The segment at 15–57 adopts a B box-type 1; atypical zinc-finger fold; the sequence is NRARPCDTCRSNACTVYCHADSAYLCMSCDAQVHSANRVASRH. The Zn(2+) site is built by Cys20, Cys23, Cys43, His48, Cys63, Cys66, Cys86, and His91. The segment at 58–108 adopts a B box-type 2; atypical zinc-finger fold; sequence KRVRVCESCERAPAAFLCEADDASLCTACDSEVHSANPLARRHQRVPILPI. Residues 109-120 show a composition bias toward polar residues; that stretch reads SGNSFSSMTTTH. The interval 109–130 is disordered; the sequence is SGNSFSSMTTTHHQSEKTMTDP. The segment covering 121–130 has biased composition (basic and acidic residues); that stretch reads HQSEKTMTDP. Residues 306 to 348 form the CCT domain; that stretch reads REARVLRYREKRKTRKFEKTIRYASRKAYAEIRPRVNGRFAKR.

It belongs to the CONSTANS family. Interacts with ADO3, SPA1, SPA2, SPA3 and SPA4. Interacts with MRG1 and MRG2 (via MRG domain). Interacts (via B-box) with MIP1A. Interacts with AS1 to form a functional complex regulating FT expression. Interacts with NFYC9. Component of a red light-dependent nuclear complex made of PHL, PHYB and CO. Interacts directly with PHL in the presence of PHYB. Expressed in leaves, shoots and shoot apical meristem. Detected in the vascular tissue of the hypocotyl, the cotyledons and the leaves. Restricted to the protoxylem and phloem in young inflorescence stems and to the phloem only in older inflorescences. Also detected in the vascular tissue of the root.

It localises to the nucleus. In terms of biological role, transcription factor that acts in the long day flowering pathway and may mediate between the circadian clock and the control of flowering. Plays a role in the regulation of flowering time by acting on 'SUPPRESSOR OF OVEREXPRESSION OF CO1', 'TERMINAL FLOWER 1' and 'FLOWERING LOCUS T'. Also regulates P5CS2 and ACS10 (involved in proline and ethylene biosynthesis, respectively). Regulates the expression of NAKR1 by binding to the 5'-TGTG(N2-3)ATG-3' motif. The protein is Zinc finger protein CONSTANS of Arabidopsis thaliana (Mouse-ear cress).